Consider the following 206-residue polypeptide: Probable peptidyl-tRNA hydrolase (206 aa).

Residue His48 is the Proton acceptor of the active site. TRNA contacts are provided by Tyr83, Asn85, and Asn137.

This sequence belongs to the PTH family.

It is found in the mitochondrion. It catalyses the reaction an N-acyl-L-alpha-aminoacyl-tRNA + H2O = an N-acyl-L-amino acid + a tRNA + H(+). Its function is as follows. Peptidyl-tRNA hydrolase involved in the recycling of tRNA-Lys from diacetyl-lysyl-tRNA-Lys and is important for mitochondrial function. The chain is Probable peptidyl-tRNA hydrolase (pth1) from Schizosaccharomyces pombe (strain 972 / ATCC 24843) (Fission yeast).